Reading from the N-terminus, the 118-residue chain is UPF0102 protein Nwi_0116 (118 aa).

This sequence belongs to the UPF0102 family.

This Nitrobacter winogradskyi (strain ATCC 25391 / DSM 10237 / CIP 104748 / NCIMB 11846 / Nb-255) protein is UPF0102 protein Nwi_0116.